A 93-amino-acid polypeptide reads, in one-letter code: DNA-directed RNA polymerase subunit omega (93 aa).

This sequence belongs to the RNA polymerase subunit omega family. In terms of assembly, the RNAP catalytic core consists of 2 alpha, 1 beta, 1 beta' and 1 omega subunit. When a sigma factor is associated with the core the holoenzyme is formed, which can initiate transcription.

The catalysed reaction is RNA(n) + a ribonucleoside 5'-triphosphate = RNA(n+1) + diphosphate. Its function is as follows. Promotes RNA polymerase assembly. Latches the N- and C-terminal regions of the beta' subunit thereby facilitating its interaction with the beta and alpha subunits. In Glaesserella parasuis serovar 5 (strain SH0165) (Haemophilus parasuis), this protein is DNA-directed RNA polymerase subunit omega.